Reading from the N-terminus, the 144-residue chain is Nucleoside diphosphate kinase (144 aa).

The ATP site is built by K11, F59, R87, T93, R104, and N114. Catalysis depends on H117, which acts as the Pros-phosphohistidine intermediate.

It belongs to the NDK family. In terms of assembly, homotetramer. It depends on Mg(2+) as a cofactor.

Its subcellular location is the cytoplasm. It carries out the reaction a 2'-deoxyribonucleoside 5'-diphosphate + ATP = a 2'-deoxyribonucleoside 5'-triphosphate + ADP. It catalyses the reaction a ribonucleoside 5'-diphosphate + ATP = a ribonucleoside 5'-triphosphate + ADP. Its function is as follows. Major role in the synthesis of nucleoside triphosphates other than ATP. The ATP gamma phosphate is transferred to the NDP beta phosphate via a ping-pong mechanism, using a phosphorylated active-site intermediate. In Sorangium cellulosum (strain So ce56) (Polyangium cellulosum (strain So ce56)), this protein is Nucleoside diphosphate kinase.